The chain runs to 248 residues: PF03932 family protein CutC (248 aa).

Belongs to the CutC family.

It is found in the cytoplasm. The protein is PF03932 family protein CutC of Porphyromonas gingivalis (strain ATCC BAA-308 / W83).